Consider the following 677-residue polypeptide: Sulfate transporter 2.1 (677 aa).

At 1–118 (MKERDSESFE…NYKLTMFKND (118 aa)) the chain is on the cytoplasmic side. The disordered stretch occupies residues 23–54 (STHMIQMAMANSGSSAAAQAGQDQPDRSKWLL). Residues 28–44 (QMAMANSGSSAAAQAGQ) show a composition bias toward low complexity. A helical transmembrane segment spans residues 119-139 (LMAGLTLASLCIPQSIGYATL). The Extracellular portion of the chain corresponds to 140 to 141 (AK). A helical membrane pass occupies residues 142–162 (LDPQYGLYTSVVPPLIYALMG). The Cytoplasmic segment spans residues 163–166 (TSRE). A helical membrane pass occupies residues 167-187 (IAIGPVAVVSLLISSMLQKLI). Residues 188-198 (DPETDPLGYKK) are Extracellular-facing. The helical transmembrane segment at 199 to 219 (LVLTTTFFAGIFQASFGLFRL) threads the bilayer. The Cytoplasmic segment spans residues 220–221 (GF). The chain crosses the membrane as a helical span at residues 222-242 (LVDFLSHAAIVGFMGGAAIVI). Residues 243–278 (GLQQLKGLLGITNFTTNTDIVSVLRAVWRSCQQQWS) lie on the Extracellular side of the membrane. N-linked (GlcNAc...) asparagine glycosylation is present at Asn-255. Residues 279 to 299 (PHTFILGCSFLSFILITRFIG) form a helical membrane-spanning segment. Over 300-304 (KKYKK) the chain is Cytoplasmic. Residues 305-325 (LFWLPAIAPLIAVVVSTLMVF) form a helical membrane-spanning segment. Topologically, residues 326-360 (LTKADEHGVKTVRHIKGGLNPMSIQDLDFNTPHLG) are extracellular. Residues 361–381 (QIAKIGLIIAIVALTEAIAVG) form a helical membrane-spanning segment. Residues 382-397 (RSFAGIKGYRLDGNKE) lie on the Cytoplasmic side of the membrane. A helical transmembrane segment spans residues 398 to 418 (MVAIGFMNVLGSFTSCYAATG). The Extracellular segment spans residues 419–426 (SFSRTAVN). A helical membrane pass occupies residues 427 to 447 (FAAGCETAMSNIVMAVTVFVA). Over 448–454 (LECLTRL) the chain is Cytoplasmic. Residues 455-475 (LYYTPIAILASIILSALPGLI) form a helical membrane-spanning segment. At 476-490 (NINEAIHIWKVDKFD) the chain is on the extracellular side. A helical membrane pass occupies residues 491–511 (FLALIGAFFGVLFASVEIGLL). Topologically, residues 512–677 (VAVVISFAKI…ALDACFGLKV (166 aa)) are cytoplasmic. One can recognise an STAS domain in the interval 548 to 672 (YPMTVKTPGV…LTIGEALDAC (125 aa)).

It belongs to the SLC26A/SulP transporter (TC 2.A.53) family. In terms of tissue distribution, expressed in root cap, central cylinder of roots and in vascular tissues of leaves.

Its subcellular location is the membrane. Functionally, low-affinity H(+)/sulfate cotransporter that may be involved in root-to-shoot translocation of sulfate. Plays a central role in the regulation of sulfate assimilation. The polypeptide is Sulfate transporter 2.1 (SULTR2;1) (Arabidopsis thaliana (Mouse-ear cress)).